Here is a 392-residue protein sequence, read N- to C-terminus: Alanine--glyoxylate aminotransferase (392 aa).

At lysine 209 the chain carries N6-(pyridoxal phosphate)lysine. N6-acetyllysine; alternate is present on lysine 225. Lysine 225 carries the N6-succinyllysine; alternate modification. Residues lysine 234 and lysine 312 each carry the N6-acetyllysine modification. Arginine 360 is a binding site for substrate. The short motif at 390-392 (KKL) is the Microbody targeting signal element.

This sequence belongs to the class-V pyridoxal-phosphate-dependent aminotransferase family. As to quaternary structure, homodimer. Pyridoxal 5'-phosphate serves as cofactor.

The protein localises to the peroxisome. It catalyses the reaction L-serine + pyruvate = 3-hydroxypyruvate + L-alanine. It carries out the reaction glyoxylate + L-alanine = glycine + pyruvate. Its function is as follows. Peroxisomal aminotransferase that catalyzes the transamination of glyoxylate to glycine and contributes to the glyoxylate detoxification. Also catalyzes the transamination between L-serine and pyruvate and contributes to gluconeogenesis from the L-serine metabolism. The chain is Alanine--glyoxylate aminotransferase from Pongo abelii (Sumatran orangutan).